A 521-amino-acid polypeptide reads, in one-letter code: Hyccin (521 aa).

Threonine 306 is subject to Phosphothreonine. At serine 321 the chain carries Phosphoserine. Residues 355 to 373 are compositionally biased toward low complexity; the sequence is AASSTSQSGLSNSSHNCSN. The interval 355 to 413 is disordered; it reads AASSTSQSGLSNSSHNCSNKTSVGKNQRRSGGSKAGAKERETAGESCRDHFARKQTQRA. Basic and acidic residues predominate over residues 390–406; the sequence is GAKERETAGESCRDHFA. Residues serine 415, serine 422, serine 433, serine 453, and serine 465 each carry the phosphoserine modification.

It belongs to the Hyccin family. In terms of assembly, component of a phosphatidylinositol 4-kinase (PI4K) complex, composed of PI4KA, EFR3 (EFR3A or EFR3B), TTC7 (TTC7A or TTC7B) and HYCC (HYCC1 or HYCC2). Interacts with TTC7 (TTC7A or TTC7B), interaction is direct. In terms of tissue distribution, predominantly expressed in the central nervous system, where it is found in neurons but not in myelinating cells. Lower abundance is observed in peripheral neurons, where it is detectable only at early postnatal ages. Expressed in both oligodendrocytes and neurons.

It is found in the cytoplasm. Its subcellular location is the cytosol. The protein localises to the cell membrane. Component of a complex required to localize phosphatidylinositol 4-kinase (PI4K) to the plasma membrane. The complex acts as a regulator of phosphatidylinositol 4-phosphate (PtdIns(4)P) synthesis. HYCC1 plays a key role in oligodendrocytes formation, a cell type with expanded plasma membrane that requires generation of PtdIns(4)P. Its role in oligodendrocytes formation probably explains its importance in myelination of the central and peripheral nervous system. May also have a role in the beta-catenin/Lef signaling pathway. This Mus musculus (Mouse) protein is Hyccin (Hycc1).